We begin with the raw amino-acid sequence, 562 residues long: MAAQLGLPLVSCHRGASQAASSSAHLVPGASAIMQAGNRRQKMRAPALRDRVVFARVVPVDGSVGFAGSSTEQETAVESATPTAVPSKVVLGRSSFPRGFIFGAASAAYQVEGAWNEGGRGPSIWDTFTHDHPEKIADHSNGDKATDSYKKYKEDVKLLKDLGLDSYRFSISWSRILPKGTLQGGINQEGIQYYNDLINELLKNGIRPMVTLFHWDVPQALEDSYKGFRSSEIVNDFKDYADICFKEFGDRVKHWITLNEPWSLSTMGYAFGRHAPGRCSTWYGCPAGDSANEPYEVTHNLLLAHANAVKIYRDNYKATQNGEIGITLNSLWYEPYSKSHEDVEAATRALDFMFGWYMDPLVNGDYPFIMRALVRDRLPFFTHAESELIKGSYDFIGINYYTSNYAQHAPVTEDHTPDNSYFDSYVNQSGEKNGVPIGPLQGSWIYFYPRGLKELLLYVKRRYCNPKIYITENGTAEVEKEKGVPLHDPERKEYLTYHLAQVLQAIREGVRVKGHFTWALTDNFEWDKGYTERFGLIYIDYDKDFNRQPKDSTKWFSKFLRT.

The N-terminal 44 residues, methionine 1 to arginine 44, are a transit peptide targeting the chloroplast. Residues glutamine 110, histidine 214, and asparagine 259–glutamate 260 contribute to the a beta-D-glucoside site. The active-site Proton donor is the glutamate 260. Cysteine 279 and cysteine 285 are disulfide-bonded. A beta-D-glucoside-binding positions include tyrosine 401, glutamate 472, tryptophan 518, glutamate 525–tryptophan 526, and phenylalanine 534. The Nucleophile role is filled by glutamate 472.

It belongs to the glycosyl hydrolase 1 family. As to quaternary structure, heterodimer. The N-terminus of the larger subunit is blocked and the smaller subunit might be derived from the larger one.

It localises to the plastid. Its subcellular location is the chloroplast. The catalysed reaction is protodioscin + H2O = 26-deglucoprotodioscin + D-glucose. Its activity is regulated as follows. Partially inhibited by glucono-1,5-lactone, conduritol beta-epoxide and diosgenin, but not by beta-sitosterol or cholesterol. Beta-glucosidase involved in saponin metabolism. Highly specific for the cleavage of C-26-bound glucose moiety of furostanol glycosides such as protogracillin and protodioscin. No activity with nuatigenin glycoside. Convers furostanol glycosides to spirostanol glycosides. This chain is Furostanol glycoside 26-O-beta-glucosidase, found in Hellenia speciosa (Crepe ginger).